The primary structure comprises 372 residues: Glutamate 5-kinase (372 aa).

Lys-6 serves as a coordination point for ATP. The substrate site is built by Ser-46, Asp-133, and Asn-145. ATP contacts are provided by residues 165–166 (TD) and 207–213 (TGGMYTK). The region spanning 272–350 (SGRLFIDEGA…HEIEKILGYK (79 aa)) is the PUA domain.

Belongs to the glutamate 5-kinase family.

The protein localises to the cytoplasm. It catalyses the reaction L-glutamate + ATP = L-glutamyl 5-phosphate + ADP. It participates in amino-acid biosynthesis; L-proline biosynthesis; L-glutamate 5-semialdehyde from L-glutamate: step 1/2. Functionally, catalyzes the transfer of a phosphate group to glutamate to form L-glutamate 5-phosphate. The sequence is that of Glutamate 5-kinase from Thermoanaerobacter pseudethanolicus (strain ATCC 33223 / 39E) (Clostridium thermohydrosulfuricum).